The sequence spans 353 residues: Phospho-N-acetylmuramoyl-pentapeptide-transferase (353 aa).

10 helical membrane passes run 22–42 (FAFFIALCLSLFLMPKFITWA), 65–85 (TPTMGGLIFISSAVIASLFCI), 88–108 (DNIFAISALLCLILFCLIGLI), 129–149 (LLAQIIAGLICILPLYFSSEL), 161–181 (PLFDMEIFAIAFWILVLISSS), 192–212 (GLATVPGIFSLSTLGIFLYLS), 228–248 (GLGEVVIICAALIGALMGFLW), 256–276 (VFMGDSGSLALGGFIGFLAVI), 281–301 (ILLLLIGFVFVLETVSVILQV), and 330–350 (KIIVRFWMIALLSNLLALASI).

The protein belongs to the glycosyltransferase 4 family. MraY subfamily. It depends on Mg(2+) as a cofactor.

Its subcellular location is the cell inner membrane. The catalysed reaction is UDP-N-acetyl-alpha-D-muramoyl-L-alanyl-gamma-D-glutamyl-meso-2,6-diaminopimeloyl-D-alanyl-D-alanine + di-trans,octa-cis-undecaprenyl phosphate = di-trans,octa-cis-undecaprenyl diphospho-N-acetyl-alpha-D-muramoyl-L-alanyl-D-glutamyl-meso-2,6-diaminopimeloyl-D-alanyl-D-alanine + UMP. It participates in cell wall biogenesis; peptidoglycan biosynthesis. Catalyzes the initial step of the lipid cycle reactions in the biosynthesis of the cell wall peptidoglycan: transfers peptidoglycan precursor phospho-MurNAc-pentapeptide from UDP-MurNAc-pentapeptide onto the lipid carrier undecaprenyl phosphate, yielding undecaprenyl-pyrophosphoryl-MurNAc-pentapeptide, known as lipid I. This is Phospho-N-acetylmuramoyl-pentapeptide-transferase from Campylobacter jejuni subsp. jejuni serotype O:2 (strain ATCC 700819 / NCTC 11168).